A 283-amino-acid polypeptide reads, in one-letter code: Serine/threonine-protein phosphatase Pgam5, mitochondrial (283 aa).

Residues 7–23 (MYGLPSAAVAVGTALLN) traverse the membrane as a helical segment.

This sequence belongs to the phosphoglycerate mutase family. BPG-dependent PGAM subfamily. As to quaternary structure, interacts with skn-1.

The protein localises to the mitochondrion outer membrane. It carries out the reaction O-phospho-L-seryl-[protein] + H2O = L-seryl-[protein] + phosphate. It catalyses the reaction O-phospho-L-threonyl-[protein] + H2O = L-threonyl-[protein] + phosphate. Displays phosphatase activity for serine/threonine residues. Has apparently no phosphoglycerate mutase activity. In Caenorhabditis briggsae, this protein is Serine/threonine-protein phosphatase Pgam5, mitochondrial (pgam-5).